Here is a 600-residue protein sequence, read N- to C-terminus: Albumin (600 aa).

The N-terminal stretch at 1–10 (LLFLFSSAYS) is a signal peptide. A propeptide spanning residues 11 to 16 (RGVFRR) is cleaved from the precursor. Albumin domains are found at residues 11–202 (RGVF…DELR), 203–395 (DEGK…EFQP), and 396–593 (LVEE…KFVA). Histidine 19 is a Cu cation binding site. Position 21 is a phosphoserine (serine 21). The Ca(2+) site is built by glutamate 22 and aspartate 29. Cysteine 69 and cysteine 78 are oxidised to a cystine. A phosphoserine mark is found at serine 74 and serine 81. Zn(2+) is bound at residue histidine 83. Intrachain disulfides connect cysteine 91/cysteine 107, cysteine 106/cysteine 117, cysteine 140/cysteine 185, cysteine 184/cysteine 193, cysteine 216/cysteine 262, and cysteine 261/cysteine 269. Threonine 99 bears the Phosphothreonine mark. N6-succinyllysine is present on lysine 221. Lysine 256 serves as a coordination point for (4Z,15Z)-bilirubin IXalpha. Position 260 (glutamate 260) interacts with Ca(2+). Zn(2+) contacts are provided by histidine 263 and aspartate 265. Aspartate 265, glutamate 268, aspartate 271, and aspartate 275 together coordinate Ca(2+). 8 cysteine pairs are disulfide-bonded: cysteine 281-cysteine 295, cysteine 294-cysteine 305, cysteine 332-cysteine 377, cysteine 376-cysteine 385, cysteine 408-cysteine 454, cysteine 453-cysteine 464, cysteine 477-cysteine 493, and cysteine 492-cysteine 503. At serine 289 the chain carries Phosphoserine. Serine 435 carries the phosphoserine modification. 2 positions are modified to phosphothreonine: threonine 436 and threonine 438. N6-succinyllysine is present on lysine 452. A Phosphoserine modification is found at serine 505. 2 cysteine pairs are disulfide-bonded: cysteine 530-cysteine 575 and cysteine 574-cysteine 583. The residue at position 535 (lysine 535) is an N6-succinyllysine. Lysine 550 carries the N6-methyllysine modification. Residue lysine 580 is modified to N6-succinyllysine.

It belongs to the ALB/AFP/VDB family. As to quaternary structure, interacts with FCGRT; this interaction regulates ALB homeostasis. Interacts with TASOR. In plasma, occurs in a covalently-linked complex with chromophore-bound alpha-1-microglobulin; this interaction does not prevent fatty acid binding to ALB. Phosphorylated by FAM20C in the extracellular medium. As to expression, plasma.

Its subcellular location is the secreted. Functionally, binds water, Ca(2+), Na(+), K(+), fatty acids, hormones, bilirubin and drugs. Its main function is the regulation of the colloidal osmotic pressure of blood. Major zinc transporter in plasma, typically binds about 80% of all plasma zinc. Major calcium and magnesium transporter in plasma, binds approximately 45% of circulating calcium and magnesium in plasma. Potentially has more than two calcium-binding sites and might additionally bind calcium in a non-specific manner. The shared binding site between zinc and calcium at residue Asp-265 suggests a crosstalk between zinc and calcium transport in the blood. The rank order of affinity is zinc &gt; calcium &gt; magnesium. Binds to the bacterial siderophore enterobactin and inhibits enterobactin-mediated iron uptake of E.coli from ferric transferrin, and may thereby limit the utilization of iron and growth of enteric bacteria such as E.coli. Does not prevent iron uptake by the bacterial siderophore aerobactin. This is Albumin (ALB) from Macaca mulatta (Rhesus macaque).